A 131-amino-acid polypeptide reads, in one-letter code: Photosystem II reaction center Psb28 protein (131 aa).

Positions 110 to 131 (NGLGYSQNQKSDQTDAATEEQA) are disordered. Residues 112–125 (LGYSQNQKSDQTDA) show a composition bias toward polar residues.

Belongs to the Psb28 family. As to quaternary structure, part of the photosystem II complex.

It localises to the cellular thylakoid membrane. The chain is Photosystem II reaction center Psb28 protein from Synechococcus sp. (strain CC9902).